A 96-amino-acid polypeptide reads, in one-letter code: Prokineticin Bv8 (96 aa).

Residues 1-19 form the signal peptide; sequence MKCFAQIVVLLLVIAFSHG. The segment at 20 to 24 is may be important for binding to prokineticin receptor 2; the sequence is AVITG. Intrachain disulfides connect Cys26–Cys38, Cys32–Cys50, Cys37–Cys78, Cys60–Cys86, and Cys80–Cys95.

Expressed by the skin glands.

Its subcellular location is the secreted. Functionally, potent agonist for both PKR1/PROKR1 and PKR2/PROKR2, and inducer of a potent and long-lasting hyperalgesia. Shows an EC(50) of 0.264 nM, when tested on neuroblastoma cells (SH-SY5Y) which endogenously express mainly PKR2/PROKR2. Also potentiates capsaicin-induced TRPV1 current, when tested on DRG neurons. Induces a biphasic hyperalgesia to tactile and thermal stimuli after systemic injection of this protein into rat. The initial phase of hyperalgesia is caused by a local action on nociceptors, because intraplantar injection of this protein causes a strong and localized hyperalgesia with a similar time course to that of the initial phase of hyperalgesia seen with systemic injection. The secondary phase of hyperalgesia is not seen with local intraplantar injection and is therefore probably attributable to a central action of this protein. At subnanomolar concentrations, this protein both induces potent chemotaxis of macrophages and stimulates LPS-induced production of the pro-inflammatory cytokines IL-1 and IL-12. In vivo, this protein potently stimulates the contraction of the guinea-pig gastrointestinal (GI) smooth muscle (at nanomolar concentration). The polypeptide is Prokineticin Bv8 (Bombina variegata (Yellow-bellied toad)).